The primary structure comprises 31 residues: Photosystem II reaction center protein M (31 aa).

Residues 5–25 form a helical membrane-spanning segment; that stretch reads ILAFIATALLILVPTAFLLII.

Belongs to the PsbM family. As to quaternary structure, PSII is composed of 1 copy each of membrane proteins PsbA, PsbB, PsbC, PsbD, PsbE, PsbF, PsbH, PsbI, PsbJ, PsbK, PsbL, PsbM, PsbT, PsbX, PsbY, PsbZ, Psb30/Ycf12, at least 3 peripheral proteins of the oxygen-evolving complex and a large number of cofactors. It forms dimeric complexes.

The protein localises to the plastid membrane. One of the components of the core complex of photosystem II (PSII). PSII is a light-driven water:plastoquinone oxidoreductase that uses light energy to abstract electrons from H(2)O, generating O(2) and a proton gradient subsequently used for ATP formation. It consists of a core antenna complex that captures photons, and an electron transfer chain that converts photonic excitation into a charge separation. This subunit is found at the monomer-monomer interface. The chain is Photosystem II reaction center protein M from Cuscuta reflexa (Southern Asian dodder).